The chain runs to 192 residues: Fe/S biogenesis protein NfuA (192 aa).

Positions 149 and 152 each coordinate [4Fe-4S] cluster.

It belongs to the NfuA family. In terms of assembly, homodimer. [4Fe-4S] cluster is required as a cofactor.

In terms of biological role, involved in iron-sulfur cluster biogenesis. Binds a 4Fe-4S cluster, can transfer this cluster to apoproteins, and thereby intervenes in the maturation of Fe/S proteins. Could also act as a scaffold/chaperone for damaged Fe/S proteins. This Shewanella denitrificans (strain OS217 / ATCC BAA-1090 / DSM 15013) protein is Fe/S biogenesis protein NfuA.